A 181-amino-acid chain; its full sequence is ATP-dependent protease subunit HslV (181 aa).

The active site involves Thr-8. Na(+) contacts are provided by Gly-165, Cys-168, and Thr-171.

Belongs to the peptidase T1B family. HslV subfamily. As to quaternary structure, a double ring-shaped homohexamer of HslV is capped on each side by a ring-shaped HslU homohexamer. The assembly of the HslU/HslV complex is dependent on binding of ATP.

It is found in the cytoplasm. The catalysed reaction is ATP-dependent cleavage of peptide bonds with broad specificity.. With respect to regulation, allosterically activated by HslU binding. Its function is as follows. Protease subunit of a proteasome-like degradation complex believed to be a general protein degrading machinery. This is ATP-dependent protease subunit HslV from Oceanobacillus iheyensis (strain DSM 14371 / CIP 107618 / JCM 11309 / KCTC 3954 / HTE831).